The sequence spans 299 residues: MAQNLKDLAGRLPAGPRGMGTALKLLLGAGAVAYGVRESVFTVEGGHRAIFFNRIGGVQQDTILAEGLHFRIPWFQYPIIYDIRARPRKISSPTGSKDLQMVNISLRVLSRPNAQELPSMYQRLGLDYEERVLPSIVNEVLKSVVAKFNASQLITQRAQVSLLIRRELTERAKDFSLILDDVAITELSFSREYTAAVEAKQVAQQEAQRAQFLVEKAKQEQRQKIVQAEGEAEAAKMLGEALSKNPGYIKLRKIRAAQNISKTIATSQNRIYLTADNLVLNLQDESFTRGSDSLIKGKK.

Ala2 carries the N-acetylalanine modification. The interval 19-49 (MGTALKLLLGAGAVAYGVRESVFTVEGGHRA) is necessary for transcriptional repression. A Phosphotyrosine modification is found at Tyr128. An N6-acetyllysine modification is found at Lys147. The necessary for transcriptional repression stretch occupies residues 150-174 (ASQLITQRAQVSLLIRRELTERAKD). Ser151 carries the post-translational modification Phosphoserine. Residues 190–238 (SREYTAAVEAKQVAQQEAQRAQFLVEKAKQEQRQKIVQAEGEAEAAKML) adopt a coiled-coil conformation. N6-acetyllysine is present on residues Lys200, Lys236, Lys250, and Lys262.

Belongs to the prohibitin family. In terms of assembly, the mitochondrial prohibitin complex consists of two subunits (PHB1 and PHB2), assembled into a membrane-associated ring-shaped supercomplex of approximately 1 mDa. Interacts with ESR1, HDAC1 and HDAC5. Interacts with ZNF703. Interacts with STOML2. Interacts with ARFGEF3. Interacts with SPHK2. Interacts with COX4I1; the interaction associates PHB2 with COX. Interacts with MAP1LC3B (membrane-bound form LC3-II); the interaction is direct and upon mitochondrial depolarization and proteasome-dependent outer membrane rupture. Interacts with IGFBP6 (via C-terminal domain). Interacts with CLPB. Interacts with CD86 (via cytoplasmic domain); the interactions increases after priming with CD40. Interacts with AFG3L2. Interacts with DNAJC19. Interacts with AKT2; this interaction may be important for myogenic differentiation. Phosphorylated. Tyrosine phosphorylation is indirectly stimulated by IGFBP6. As to expression, widely expressed in different tissues.

Its subcellular location is the mitochondrion inner membrane. It localises to the cytoplasm. It is found in the nucleus. The protein resides in the cell membrane. In terms of biological role, protein with pleiotropic attributes mediated in a cell-compartment- and tissue-specific manner, which include the plasma membrane-associated cell signaling functions, mitochondrial chaperone, and transcriptional co-regulator of transcription factors and sex steroid hormones in the nucleus. Functionally, in the mitochondria, together with PHB, forms large ring complexes (prohibitin complexes) in the inner mitochondrial membrane (IMM) and functions as a chaperone protein that stabilizes mitochondrial respiratory enzymes and maintains mitochondrial integrity in the IMM, which is required for mitochondrial morphogenesis, neuronal survival, and normal lifespan. The prohibitin complex, with DNAJC19, regulates cardiolipin remodeling and the protein turnover of OMA1 in a cardiolipin-binding manner. Also regulates cytochrome-c oxidase assembly (COX) and mitochondrial respiration. Binding to sphingoid 1-phosphate (SPP) modulates its regulator activity. Has a key role of mitophagy receptor involved in targeting mitochondria for autophagic degradation. Involved in mitochondrial-mediated antiviral innate immunity, activates RIG-I-mediated signal transduction and production of IFNB1 and pro-inflammatory cytokine IL6. Its function is as follows. In the nucleus, serves as transcriptional co-regulator. Acts as a mediator of transcriptional repression by nuclear hormone receptors via recruitment of histone deacetylases. Functions as an estrogen receptor (ER)-selective coregulator that potentiates the inhibitory activities of antiestrogens and represses the activity of estrogens. Competes with NCOA1 for modulation of ER transcriptional activity. In the plasma membrane, is involved in IGFBP6-induced cell migration. Cooperates with CD86 to mediate CD86-signaling in B lymphocytes that regulates the level of IgG1 produced through the activation of distal signaling intermediates. Upon CD40 engagement, required to activate NF-kappa-B signaling pathway via phospholipase C and protein kinase C activation. This is Prohibitin-2 from Mus musculus (Mouse).